We begin with the raw amino-acid sequence, 476 residues long: Sulfate adenylyltransferase subunit 1 (476 aa).

Residues 24 to 239 (KSLLRFLTCG…LLETVDVDHE (216 aa)) enclose the tr-type G domain. The G1 stretch occupies residues 33–40 (GSVDDGKS). 33–40 (GSVDDGKS) contributes to the GTP binding site. Residues 91-95 (GITID) are G2. The tract at residues 112 to 115 (DTPG) is G3. GTP contacts are provided by residues 112 to 116 (DTPGH) and 167 to 170 (NKMD). The G4 stretch occupies residues 167-170 (NKMD). The G5 stretch occupies residues 205–207 (SAL).

This sequence belongs to the TRAFAC class translation factor GTPase superfamily. Classic translation factor GTPase family. CysN/NodQ subfamily. In terms of assembly, heterodimer composed of CysD, the smaller subunit, and CysN.

It catalyses the reaction sulfate + ATP + H(+) = adenosine 5'-phosphosulfate + diphosphate. It functions in the pathway sulfur metabolism; hydrogen sulfide biosynthesis; sulfite from sulfate: step 1/3. In terms of biological role, with CysD forms the ATP sulfurylase (ATPS) that catalyzes the adenylation of sulfate producing adenosine 5'-phosphosulfate (APS) and diphosphate, the first enzymatic step in sulfur assimilation pathway. APS synthesis involves the formation of a high-energy phosphoric-sulfuric acid anhydride bond driven by GTP hydrolysis by CysN coupled to ATP hydrolysis by CysD. This is Sulfate adenylyltransferase subunit 1 from Vibrio campbellii (strain ATCC BAA-1116).